The following is a 255-amino-acid chain: tRNA1(Val) (adenine(37)-N6)-methyltransferase (255 aa).

This sequence belongs to the methyltransferase superfamily. tRNA (adenine-N(6)-)-methyltransferase family.

The protein resides in the cytoplasm. The enzyme catalyses adenosine(37) in tRNA1(Val) + S-adenosyl-L-methionine = N(6)-methyladenosine(37) in tRNA1(Val) + S-adenosyl-L-homocysteine + H(+). In terms of biological role, specifically methylates the adenine in position 37 of tRNA(1)(Val) (anticodon cmo5UAC). The polypeptide is tRNA1(Val) (adenine(37)-N6)-methyltransferase (Porphyromonas gingivalis (strain ATCC BAA-308 / W83)).